A 161-amino-acid chain; its full sequence is Large ribosomal subunit protein uL15 (161 aa).

The segment at 1–43 (MKLSEISDNPGARKKRMRIGRGIGSGKGKTGGRGGKGQTARSG) is disordered. The span at 21–37 (RGIGSGKGKTGGRGGKG) shows a compositional bias: gly residues.

Belongs to the universal ribosomal protein uL15 family. Part of the 50S ribosomal subunit.

Functionally, binds to the 23S rRNA. This Rhodopseudomonas palustris (strain HaA2) protein is Large ribosomal subunit protein uL15.